We begin with the raw amino-acid sequence, 195 residues long: dTTP/UTP pyrophosphatase (195 aa).

Catalysis depends on Asp73, which acts as the Proton acceptor.

It belongs to the Maf family. YhdE subfamily. A divalent metal cation is required as a cofactor.

The protein resides in the cytoplasm. It catalyses the reaction dTTP + H2O = dTMP + diphosphate + H(+). It carries out the reaction UTP + H2O = UMP + diphosphate + H(+). Nucleoside triphosphate pyrophosphatase that hydrolyzes dTTP and UTP. May have a dual role in cell division arrest and in preventing the incorporation of modified nucleotides into cellular nucleic acids. The polypeptide is dTTP/UTP pyrophosphatase (Exiguobacterium sibiricum (strain DSM 17290 / CCUG 55495 / CIP 109462 / JCM 13490 / 255-15)).